Consider the following 361-residue polypeptide: MSVQVSPEQMATLKATLLNTPGNVPLHERFRALFMLKAVGGDEVVDIVSEGLKDPSPLLKHELAYVLGQLLNTRALPTLSRVLENPTGEHCSMVRHEAAEALGAIGAEESLPILRKYMQDENREVRETCEIAVGKIEFDLSEEGKKANANPDFPTIDPAPSAAPSDIPSLRADLLNTSLPLFQRYRAMFALRDFGAGSKEAVEALADGFRDGSALFRHEIAYIFGQLSSPYSIPSLLSRLRDAKEDDMVRHEAAEALGGIASDGVESENPEVVLPEDERLPEGGVLAVLREWAVKADAPTVVRESCQVAIDMWEYENSADQFNPLDSLSAKQEEREKTEKVNTTGMERSAHAAVAAMGIAA.

HEAT-like PBS-type repeat units lie at residues Leu59 to Asn85, Val94 to Asp120, Gln183 to Asp211, and Phe216 to Asp242. Residues His61, Glu62, His96, and Glu97 each contribute to the Fe cation site. Fe cation-binding residues include His218, Glu219, His251, and Glu252.

It belongs to the deoxyhypusine hydroxylase family. The cofactor is Fe(2+).

It is found in the cytoplasm. It localises to the nucleus. The enzyme catalyses [eIF5A protein]-deoxyhypusine + AH2 + O2 = [eIF5A protein]-hypusine + A + H2O. The protein operates within protein modification; eIF5A hypusination. Functionally, catalyzes the hydroxylation of the N(6)-(4-aminobutyl)-L-lysine intermediate to form hypusine, an essential post-translational modification only found in mature eIF-5A factor. This is Deoxyhypusine hydroxylase from Cryptococcus neoformans var. neoformans serotype D (strain B-3501A) (Filobasidiella neoformans).